The sequence spans 600 residues: Proline--tRNA ligase (600 aa).

This sequence belongs to the class-II aminoacyl-tRNA synthetase family. ProS type 1 subfamily. In terms of assembly, homodimer.

It is found in the cytoplasm. It catalyses the reaction tRNA(Pro) + L-proline + ATP = L-prolyl-tRNA(Pro) + AMP + diphosphate. Functionally, catalyzes the attachment of proline to tRNA(Pro) in a two-step reaction: proline is first activated by ATP to form Pro-AMP and then transferred to the acceptor end of tRNA(Pro). As ProRS can inadvertently accommodate and process non-cognate amino acids such as alanine and cysteine, to avoid such errors it has two additional distinct editing activities against alanine. One activity is designated as 'pretransfer' editing and involves the tRNA(Pro)-independent hydrolysis of activated Ala-AMP. The other activity is designated 'posttransfer' editing and involves deacylation of mischarged Ala-tRNA(Pro). The misacylated Cys-tRNA(Pro) is not edited by ProRS. This Prochlorococcus marinus (strain AS9601) protein is Proline--tRNA ligase.